A 141-amino-acid chain; its full sequence is MALERTLSIIKPDAVAKNVIGQIYARFEGAGLKIVAAKMIHLSRAEAEQFYAVHKERPFFKDLVDFMISGPVMVQALEGENAIAKNRDLMGATDPKKAEKGTIRADFADSIDANAVHGSDAAETAAVEVAFFFPGLNIYSR.

Lys-11, Phe-59, Arg-87, Thr-93, Arg-104, and Asn-114 together coordinate ATP. His-117 acts as the Pros-phosphohistidine intermediate in catalysis.

The protein belongs to the NDK family. In terms of assembly, homotetramer. Requires Mg(2+) as cofactor.

Its subcellular location is the cytoplasm. The catalysed reaction is a 2'-deoxyribonucleoside 5'-diphosphate + ATP = a 2'-deoxyribonucleoside 5'-triphosphate + ADP. It carries out the reaction a ribonucleoside 5'-diphosphate + ATP = a ribonucleoside 5'-triphosphate + ADP. In terms of biological role, major role in the synthesis of nucleoside triphosphates other than ATP. The ATP gamma phosphate is transferred to the NDP beta phosphate via a ping-pong mechanism, using a phosphorylated active-site intermediate. In Ralstonia pickettii (strain 12J), this protein is Nucleoside diphosphate kinase.